A 414-amino-acid chain; its full sequence is tRNA methyltransferase 10 homolog C (414 aa).

A mitochondrion-targeting transit peptide spans methionine 1–tyrosine 35. Serine 79 carries the phosphoserine modification. The stretch at glycine 133 to glutamate 162 forms a coiled coil. In terms of domain architecture, SAM-dependent MTase TRM10-type spans leucine 186–glycine 378.

Belongs to the class IV-like SAM-binding methyltransferase superfamily. TRM10 family. As to quaternary structure, component of mitochondrial ribonuclease P, a complex composed of TRMT10C/MRPP1, HSD17B10/MRPP2 and PRORP/MRPP3. Interacts with HSD17B10/MRPP2; forming the MRPP1-MRPP2 subcomplex of the mitochondrial ribonuclease P complex. Interacts with GRSF1.

It localises to the mitochondrion matrix. The protein resides in the mitochondrion nucleoid. The enzyme catalyses adenosine(9) in tRNA + S-adenosyl-L-methionine = N(1)-methyladenosine(9) in tRNA + S-adenosyl-L-homocysteine + H(+). It carries out the reaction guanosine(9) in tRNA + S-adenosyl-L-methionine = N(1)-methylguanosine(9) in tRNA + S-adenosyl-L-homocysteine + H(+). The catalysed reaction is an adenosine in mRNA + S-adenosyl-L-methionine = an N(1)-methyladenosine in mRNA + S-adenosyl-L-homocysteine + H(+). Functionally, mitochondrial tRNA N(1)-methyltransferase involved in mitochondrial tRNA maturation. Component of mitochondrial ribonuclease P, a complex composed of TRMT10C/MRPP1, HSD17B10/MRPP2 and PRORP/MRPP3, which cleaves tRNA molecules in their 5'-ends. Together with HSD17B10/MRPP2, forms a subcomplex of the mitochondrial ribonuclease P, named MRPP1-MRPP2 subcomplex, which displays functions that are independent of the ribonuclease P activity. The MRPP1-MRPP2 subcomplex catalyzes the formation of N(1)-methylguanine and N(1)-methyladenine at position 9 (m1G9 and m1A9, respectively) in tRNAs; TRMT10C/MRPP1 acting as the catalytic N(1)-methyltransferase subunit. The MRPP1-MRPP2 subcomplex also acts as a tRNA maturation platform: following 5'-end cleavage by the mitochondrial ribonuclease P complex, the MRPP1-MRPP2 subcomplex enhances the efficiency of 3'-processing catalyzed by ELAC2, retains the tRNA product after ELAC2 processing and presents the nascent tRNA to the mitochondrial CCA tRNA nucleotidyltransferase TRNT1 enzyme. In addition to tRNA N(1)-methyltransferase activity, TRMT10C/MRPP1 also acts as a mRNA N(1)-methyltransferase by mediating methylation of adenosine residues at the N(1) position of MT-ND5 mRNA. Associates with mitochondrial DNA complexes at the nucleoids to initiate RNA processing and ribosome assembly. The sequence is that of tRNA methyltransferase 10 homolog C from Rattus norvegicus (Rat).